The sequence spans 107 residues: Nucleoid-associated protein Oant_0022 (107 aa).

The protein belongs to the YbaB/EbfC family. In terms of assembly, homodimer.

The protein localises to the cytoplasm. It localises to the nucleoid. Its function is as follows. Binds to DNA and alters its conformation. May be involved in regulation of gene expression, nucleoid organization and DNA protection. The polypeptide is Nucleoid-associated protein Oant_0022 (Brucella anthropi (strain ATCC 49188 / DSM 6882 / CCUG 24695 / JCM 21032 / LMG 3331 / NBRC 15819 / NCTC 12168 / Alc 37) (Ochrobactrum anthropi)).